We begin with the raw amino-acid sequence, 373 residues long: 1-deoxy-D-xylulose 5-phosphate reductoisomerase (373 aa).

Residues T10, G11, S12, I13, R37, and N112 each contribute to the NADPH site. K113 contacts 1-deoxy-D-xylulose 5-phosphate. E114 is a binding site for NADPH. D134 serves as a coordination point for Mn(2+). 1-deoxy-D-xylulose 5-phosphate is bound by residues S135, E136, S160, and H183. Residue E136 participates in Mn(2+) binding. G189 provides a ligand contact to NADPH. 1-deoxy-D-xylulose 5-phosphate-binding residues include S196, N201, K202, and E205. Mn(2+) is bound at residue E205.

This sequence belongs to the DXR family. Requires Mg(2+) as cofactor. The cofactor is Mn(2+).

The catalysed reaction is 2-C-methyl-D-erythritol 4-phosphate + NADP(+) = 1-deoxy-D-xylulose 5-phosphate + NADPH + H(+). It participates in isoprenoid biosynthesis; isopentenyl diphosphate biosynthesis via DXP pathway; isopentenyl diphosphate from 1-deoxy-D-xylulose 5-phosphate: step 1/6. Functionally, catalyzes the NADPH-dependent rearrangement and reduction of 1-deoxy-D-xylulose-5-phosphate (DXP) to 2-C-methyl-D-erythritol 4-phosphate (MEP). In Persephonella marina (strain DSM 14350 / EX-H1), this protein is 1-deoxy-D-xylulose 5-phosphate reductoisomerase.